The chain runs to 251 residues: Short chain dehydrogenase gsfK (251 aa).

NADP(+)-binding residues include leucine 14, threonine 33, glutamate 60, asparagine 88, and lysine 122. Catalysis depends on proton donor residues serine 143 and tyrosine 161. Positions 161, 165, 192, and 194 each coordinate NADP(+). The Lowers pKa of active site Tyr role is filled by lysine 165.

Belongs to the short-chain dehydrogenases/reductases (SDR) family.

It functions in the pathway secondary metabolite biosynthesis; terpenoid biosynthesis. Functionally, short chain dehydrogenase; part of the gene cluster that mediates the biosynthesis of griseofulvin, an important antifungal drug that has been in use for a long time for treating dermatophyte infections. The first step of the pathway is the formation of the heptaketide backbone by gsfA which is initiated by priming with acetyl-CoA, followed by sequential condensations of 6 malonyl-CoA units. The resulting benzophenone can undergo a spontaneous dehydration to form norlichexanthone. However, the true precursor for the griseofulvin biosynthesis is not norlichexanthone, but the heptaketide benzophenone that is O-methylated at 3-OH by gsfB to produce griseophenone D which is further methylated at 9-OH by gsfC to yield griseophenone C. Griseophenone C is then substrate of halogenase gsfI which is responsible for the regio-specific chlorination at the C13 position to form griseophenone B. The cytochrome P450 gsfF catalyzes the coupling of orcinol and phloroglucinol rings in griseophenone B to form desmethyl-dehydrogriseofulvin A which is further methylated at 5-OH by gsfD to yield dehydrogriseofulvin. Finally, gsfE performs stereospecific reduction of enone 18 of dehydrogriseofulvin to afford the final product griseofulvin. The exact role of gsfK within the pathway has not been identified yet. In Penicillium aethiopicum, this protein is Short chain dehydrogenase gsfK.